A 528-amino-acid polypeptide reads, in one-letter code: Drimenol cyclase drtB (528 aa).

Belongs to the HAD-like hydrolase superfamily.

The catalysed reaction is (2E,6E)-farnesyl diphosphate + H2O = (5S,9S,10S)-drim-7-en-11-ol + diphosphate. The protein operates within secondary metabolite biosynthesis; terpenoid biosynthesis. Functionally, drimenol cyclase; part of the gene cluster that mediates the biosynthesis of various drimane-type sesquiterpene esters, compounds that exhibit diverse biological activities and are widely present in eukaryotes. The pathway begins with the synthesis of the backbone drimenol by the terpene cyclase drtB using farnesyl pyrophosphate (FPP) as substrate. The cytochrome P450 monooxygenase drtD is then responsible for the hydroxylations at C-6, C-9 and C-12, as well as the oxidation of hydroxyl groups at C-6 and C-11 to a ketone and an aldehyde, respectively. Then, the biosynthesis can go in two directions, either the hydroxylated drimenol is further hydroxylated at C-2 and C-3 by an enzyme(s) not associated with the drt cluster, or the FAD-binding oxidoreductase drtC further oxidizes C-11 or C-12 to form the butyrolactone ring. DrtB, drtD and drtC are solely responsible for the formation of the different drimane structures observed during drimane sesquiterpenes biosynthesis. The polyketide synthase drtA synthesizes different lengths (C6 and C8) of PKS chains, which are then oxidized to varying degrees by the short-chain dehydrogenase drtF. Finally, these PKS chains are transferred onto drimane sesquiterpenes by the acyltransferase drtE, forming the sesquiterpene esters. In addition to the different fatty acyl-CoA chains produced by drtA, drtE is also able to use cinnamoyl-CoA as a substrate. In Aspergillus calidoustus, this protein is Drimenol cyclase drtB.